A 250-amino-acid polypeptide reads, in one-letter code: Tripartite motif-containing protein 74 (250 aa).

The RING-type zinc finger occupies 16 to 57 (CPICLEVFKESLMLQCGHSYCKGCLVSLSYHLDTKVRCPMCW). The segment at 84–125 (PEPKVCVHHRNPLSLFCEKDQELICGLCGLLGSHQHHPVTPV) adopts a B box-type zinc-finger fold. Zn(2+)-binding residues include Cys89, His92, Cys111, and His117. 2 coiled-coil regions span residues 125-169 (VSTV…NESD) and 204-235 (LVAS…FGNE).

It belongs to the TRIM/RBCC family.

In Homo sapiens (Human), this protein is Tripartite motif-containing protein 74 (TRIM74).